The chain runs to 131 residues: Neurophysin 2 (131 aa).

7 disulfide bridges follow: Cys10/Cys55, Cys13/Cys27, Cys21/Cys45, Cys28/Cys35, Cys62/Cys74, Cys68/Cys86, and Cys75/Cys80.

Belongs to the vasopressin/oxytocin family.

It localises to the secreted. Its function is as follows. Neurophysin 2 specifically binds vasopressin. The chain is Neurophysin 2 from Anser anser anser (Western greylag goose).